Here is a 464-residue protein sequence, read N- to C-terminus: Serine protease PepD (464 aa).

Residues 1-71 (MAKLARVVGL…TQYRQPYEAL (71 aa)) are disordered. Residues 1–100 (MAKLARVVGL…GMVRQRPRAG (100 aa)) are Cytoplasmic-facing. A compositionally biased stretch (low complexity) spans 39-48 (QGQQQTYSQQ). The chain crosses the membrane as a helical span at residues 101-121 (MLAIGAVTIAVVSAGIGGAAA). Over 122–464 (SLVGFNRAPA…VQVTLGKAEQ (343 aa)) the chain is Periplasmic. Active-site charge relay system residues include His197, Asp236, and Ser317. Residues 368 to 449 (LISTGKASHA…TVALTFQDPS (82 aa)) form the PDZ domain.

The protein belongs to the peptidase S1C family. In terms of assembly, homotrimer. Interacts with numerous proteins, including the 35 kDa antigen PspA.

Its subcellular location is the cell inner membrane. It localises to the secreted. The protein resides in the cell wall. It catalyses the reaction Acts on substrates that are at least partially unfolded. The cleavage site P1 residue is normally between a pair of hydrophobic residues, such as Val-|-Val.. With respect to regulation, probably regulates its own activity by autocleavage, which removes the PDZ domain. Inhibited by the serine protease inhibitor diisopropylfluorophosphate (DFP). Inhibited by fluoroquinolone such as ciprofloxacin, moxifloxacin and ofloxacin and their analogs. Functionally, required for virulence. Acts both as a protease, which degrades and/or refolds damaged substrate targets, and as a chaperone. Plays an important role in the stress response network mediated through the two-component regulatory system MprAB and SigE signaling networks. May utilize its PDZ domain to recognize and process misfolded proteins at the cell membrane, leading to activation of the MprAB and SigE signaling pathways and subsequent establishment of a positive feedback loop that facilitates bacterial adaptation. Interacts with and potentially cleaves several proteins, including the 35 kDa antigen PspA. Proteolytic cleavage of PspA may help to maintain cell envelope homeostasis in Mycobacterium and regulate specific stress response pathways during periods of extracytoplasmic stress. In vitro, exhibits proteolytic activity against the artificial substrate beta-casein. This is Serine protease PepD from Mycobacterium tuberculosis (strain ATCC 25618 / H37Rv).